Reading from the N-terminus, the 115-residue chain is DNA-binding protein APE_1087b (115 aa).

This sequence belongs to the PDCD5 family.

The polypeptide is DNA-binding protein APE_1087b (Aeropyrum pernix (strain ATCC 700893 / DSM 11879 / JCM 9820 / NBRC 100138 / K1)).